Here is a 425-residue protein sequence, read N- to C-terminus: Zinc finger protein 789 (425 aa).

The KRAB domain maps to 11 to 82; the sequence is LSFEDVAMYF…DLPRTGNRKA (72 aa). C2H2-type zinc fingers lie at residues 201-223, 229-251, 257-279, 285-307, 313-335, 341-363, 369-391, and 397-419; these read YECS…QRIH, FECK…KQCH, YRCH…KRIH, YKCS…QVIH, HKCL…QQIH, HKCS…QRIH, FQCG…QVIH, and YQCV…QGTH.

Belongs to the krueppel C2H2-type zinc-finger protein family.

It localises to the nucleus. Functionally, may be involved in transcriptional regulation. The protein is Zinc finger protein 789 (ZNF789) of Homo sapiens (Human).